We begin with the raw amino-acid sequence, 196 residues long: UMP-CMP kinase (196 aa).

Residue 13–18 coordinates ATP; the sequence is GAGKGT. The residue at position 33 (Ser-33) is a Phosphoserine. Positions 33-63 are NMP; it reads SAGELLRDERKNPDSQYGELIEKYIKDGKIV. Arg-39 serves as a coordination point for a ribonucleoside 5'-phosphate. Lys-43 and Lys-55 each carry N6-acetyllysine. A ribonucleoside 5'-phosphate contacts are provided by residues 61 to 63 and 93 to 96; these read KIV and GFPR. Asn-100 is a binding site for CMP. Lys-106 is modified (N6-succinyllysine). Residues 133-143 are LID; sequence ERGKSSGRSDD. Position 134 (Arg-134) interacts with ATP. A ribonucleoside 5'-phosphate is bound by residues Arg-140 and Arg-151. An ATP-binding site is contributed by Lys-179. The residue at position 180 (Ser-180) is a Phosphoserine.

Belongs to the adenylate kinase family. UMP-CMP kinase subfamily. In terms of assembly, monomer. Requires Mg(2+) as cofactor.

The protein localises to the nucleus. It localises to the cytoplasm. It carries out the reaction CMP + ATP = CDP + ADP. It catalyses the reaction dCMP + ATP = dCDP + ADP. The enzyme catalyses UMP + ATP = UDP + ADP. The catalysed reaction is a 2'-deoxyribonucleoside 5'-diphosphate + ATP = a 2'-deoxyribonucleoside 5'-triphosphate + ADP. It carries out the reaction a ribonucleoside 5'-diphosphate + ATP = a ribonucleoside 5'-triphosphate + ADP. In terms of biological role, catalyzes the phosphorylation of pyrimidine nucleoside monophosphates at the expense of ATP. Plays an important role in de novo pyrimidine nucleotide biosynthesis. Has preference for UMP and CMP as phosphate acceptors. Also displays broad nucleoside diphosphate kinase activity. This Bos taurus (Bovine) protein is UMP-CMP kinase.